Reading from the N-terminus, the 576-residue chain is Origin recognition complex subunit 2 (576 aa).

The stretch at 1-100 (MSTLRLKEAK…RNKVYSFQHR (100 aa)) is one Involved in LRWD1-binding repeat. Phosphothreonine is present on Thr-116. Residues 119–218 (KIDPLASNDP…SQGQNRLLPA (100 aa)) form a disordered region. The span at 149–161 (ENNNKNEFPSIQP) shows a compositional bias: polar residues. A compositionally biased stretch (acidic residues) spans 186–200 (SEDDEEVAKDDEEDT). Ser-246 is modified (phosphoserine).

The protein belongs to the ORC2 family. As to quaternary structure, component of ORC, a complex composed of at least 6 subunits: ORC1, ORC2, ORC3, ORC4, ORC5 and ORC6. ORC is regulated in a cell-cycle dependent manner. It is sequentially assembled at the exit from anaphase of mitosis and disassembled as cells enter S phase. Interacts with DBF4. Interacts with MCM10. Interacts with LRWD1 throughout the cell cycle; this interaction, which occurs only with non-ubiquitinated form of LRWD1, prevents LRWD1 ubiquitination and hence stabilizes the protein. Interacts with POLQ.

The protein resides in the nucleus. Its function is as follows. Component of the origin recognition complex (ORC) that binds origins of replication. DNA-binding is ATP-dependent. The specific DNA sequences that define origins of replication have not been identified yet. ORC is required to assemble the pre-replication complex necessary to initiate DNA replication. Binds histone H3 and H4 trimethylation marks H3K9me3, H3K20me3 and H4K27me3. Stabilizes LRWD1, by protecting it from ubiquitin-mediated proteasomal degradation. Also stabilizes ORC3. The polypeptide is Origin recognition complex subunit 2 (Orc2) (Rattus norvegicus (Rat)).